Reading from the N-terminus, the 441-residue chain is ATP-dependent RNA helicase SUB2-1 (441 aa).

The span at 1-19 (MSHEGEEDLLEYSDNEQDI) shows a compositional bias: acidic residues. A disordered region spans residues 1-46 (MSHEGEEDLLEYSDNEQDIQVDASKAAEPSELDATTAEDASNGDAE). The Q motif motif lies at 57 to 85 (TGFKDFLLKPELARAIIDCGFEHPSEVQQ). One can recognise a Helicase ATP-binding domain in the interval 88–263 (IPQSIHGTDV…RRFLQNPLEI (176 aa)). 101–108 (AKSGLGKT) provides a ligand contact to ATP. Positions 210–213 (DECD) match the DECD box motif. One can recognise a Helicase C-terminal domain in the interval 291–436 (KLAQLLDDLE…EFPEEGIDPS (146 aa)).

This sequence belongs to the DEAD box helicase family. DECD subfamily.

It is found in the nucleus. The enzyme catalyses ATP + H2O = ADP + phosphate + H(+). ATP-binding RNA helicase involved in transcription elongation and required for the export of mRNA out of the nucleus. SUB2 also plays a role in pre-mRNA splicing and spliceosome assembly. May be involved in rDNA and telomeric silencing, and maintenance of genome integrity. The chain is ATP-dependent RNA helicase SUB2-1 (SUB2-1) from Vanderwaltozyma polyspora (strain ATCC 22028 / DSM 70294 / BCRC 21397 / CBS 2163 / NBRC 10782 / NRRL Y-8283 / UCD 57-17) (Kluyveromyces polysporus).